Reading from the N-terminus, the 164-residue chain is Arginine repressor (164 aa).

The protein belongs to the ArgR family.

The protein resides in the cytoplasm. The protein operates within amino-acid biosynthesis; L-arginine biosynthesis [regulation]. Functionally, regulates arginine biosynthesis genes. The chain is Arginine repressor from Mycolicibacterium paratuberculosis (strain ATCC BAA-968 / K-10) (Mycobacterium paratuberculosis).